Consider the following 593-residue polypeptide: MASSTPSPATSSNAGADPNTTNLRPTTYDTWCGVAHGCTRKLGLKICGFLQRTNSLEEKSRLVSAFRERQASKNLLSCENSDPGARFRRTETDFSNLFAQDLLPAKNGEEQTVQFLLEVVDILLNYVRKTFDRSTKVLDFHHPHQLLEGMEGFNLELSDHPESLEQILVDCRDTLKYGVRTGHPRFFNQLSTGLDIIGLAGEWLTSTANTNMFTYEIAPVFVLMEQITLKKMREIIGWSNKDGDGIFSPGGAISNMYSIMAARYKYFPEVKTKGMAAVPKLVLFTSEHSHYSIKKAGAALGFGTDNVILIKCNERGKIIPADLEAKILDAKQKGFVPLYVNATAGTTVYGAFDPIQEIADICEKYNLWLHVDAAWGGGLLMSRKHRHKLSGIERANSVTWNPHKMMGVLLQCSAILVKEKGILQGCNQMCAGYLFQPDKQYDVSYDTGDKAIQCGRHVDIFKFWLMWKAKGTVGFENQINKCLELAEYLYAKIKNREEFEMVFNGEPEHTNVCFWYIPQSLRGVPDSPERREKLHRVAPKIKALMMESGTTMVGYQPQGDKANFFRMVISNPAATQSDIDFLIEEIERLGQDL.

Residues 1 to 12 (MASSTPSPATSS) are compositionally biased toward low complexity. Residues 1 to 22 (MASSTPSPATSSNAGADPNTTN) are disordered. Ser77 is subject to Phosphoserine. 189–191 (QLS) contacts 4-aminobutanoate. Lys404 is modified (N6-(pyridoxal phosphate)lysine). Arg566 contacts 4-aminobutanoate.

The protein belongs to the group II decarboxylase family. As to quaternary structure, homodimer. Requires pyridoxal 5'-phosphate as cofactor. Expressed in brain and pancreatic islets.

The enzyme catalyses L-glutamate + H(+) = 4-aminobutanoate + CO2. Its function is as follows. Catalyzes the synthesis of the inhibitory neurotransmitter gamma-aminobutyric acid (GABA) with pyridoxal 5'-phosphate as cofactor. The polypeptide is Glutamate decarboxylase 1 (Gad1) (Rattus norvegicus (Rat)).